Here is a 241-residue protein sequence, read N- to C-terminus: Ribonuclease PH (241 aa).

Phosphate-binding positions include Arg87 and 125–127 (GTR).

Belongs to the RNase PH family. In terms of assembly, homohexameric ring arranged as a trimer of dimers.

It carries out the reaction tRNA(n+1) + phosphate = tRNA(n) + a ribonucleoside 5'-diphosphate. In terms of biological role, phosphorolytic 3'-5' exoribonuclease that plays an important role in tRNA 3'-end maturation. Removes nucleotide residues following the 3'-CCA terminus of tRNAs; can also add nucleotides to the ends of RNA molecules by using nucleoside diphosphates as substrates, but this may not be physiologically important. Probably plays a role in initiation of 16S rRNA degradation (leading to ribosome degradation) during starvation. This Nitrosomonas europaea (strain ATCC 19718 / CIP 103999 / KCTC 2705 / NBRC 14298) protein is Ribonuclease PH.